The chain runs to 136 residues: Large ribosomal subunit protein uL16c (136 aa).

Belongs to the universal ribosomal protein uL16 family. As to quaternary structure, part of the 50S ribosomal subunit.

The protein resides in the plastid. It is found in the chloroplast. The sequence is that of Large ribosomal subunit protein uL16c from Chloranthus spicatus (Chulantree).